The chain runs to 106 residues: ATP-dependent Clp protease adapter protein ClpS (106 aa).

The protein belongs to the ClpS family. Binds to the N-terminal domain of the chaperone ClpA.

Functionally, involved in the modulation of the specificity of the ClpAP-mediated ATP-dependent protein degradation. The chain is ATP-dependent Clp protease adapter protein ClpS from Yersinia pestis bv. Antiqua (strain Antiqua).